A 435-amino-acid chain; its full sequence is Glutamate-1-semialdehyde 2,1-aminomutase (435 aa).

Position 266 is an N6-(pyridoxal phosphate)lysine (lysine 266).

This sequence belongs to the class-III pyridoxal-phosphate-dependent aminotransferase family. HemL subfamily. In terms of assembly, homodimer. Pyridoxal 5'-phosphate is required as a cofactor.

Its subcellular location is the cytoplasm. It catalyses the reaction (S)-4-amino-5-oxopentanoate = 5-aminolevulinate. The protein operates within porphyrin-containing compound metabolism; protoporphyrin-IX biosynthesis; 5-aminolevulinate from L-glutamyl-tRNA(Glu): step 2/2. The protein is Glutamate-1-semialdehyde 2,1-aminomutase of Coxiella burnetii (strain Dugway 5J108-111).